A 186-amino-acid polypeptide reads, in one-letter code: uncharacterized protein (186 aa).

This is an uncharacterized protein from Haemophilus influenzae (strain ATCC 51907 / DSM 11121 / KW20 / Rd).